A 724-amino-acid chain; its full sequence is Small conductance calcium-activated potassium channel protein 3 (724 aa).

Residues 1 to 11 are compositionally biased toward basic and acidic residues; it reads MDTSGHFHDSG. Disordered stretches follow at residues 1 to 161 and 232 to 251; these read MDTS…RDSN and ATHN…FPKA. Over residues 34–58 the composition is skewed to pro residues; that stretch reads QPPPPPPPPAPPAAPQQPPGPPLQP. Residues 59-88 show a composition bias toward low complexity; that stretch reads QPLQLQQQQQQQQQQPPHPLSQLAQLQSQP. The segment covering 105 to 125 has biased composition (polar residues); it reads PSSNSTAILHPSSRQGSQLNL. Low complexity predominate over residues 131–140; that stretch reads GHSPSSTATS. A Phosphoserine modification is found at Ser160. The span at 232-249 shows a compositional bias: polar residues; that stretch reads ATHNHQHAGTTASSTTFP. A helical membrane pass occupies residues 281 to 301; it reads LIFGMFGIVVMVIETELSWGL. Residues 308 to 328 form a helical membrane-spanning segment; it reads FSLALKCLISLSTIILLGLII. Residues 359–379 form a helical membrane-spanning segment; it reads ISLEMLVCAIHPIPGEYKFFW. Residues 398 to 418 form a helical membrane-spanning segment; the sequence is IILSIPMFLRLYLIARVMLLH. A helical transmembrane segment spans residues 447 to 467; that stretch reads LMTICPGTVLLVFSISLWIIA. Positions 487–507 form an intramembrane region, pore-forming; the sequence is FLGAMWLISITFLSIGYGDMV. The helical transmembrane segment at 516–536 threads the bilayer; the sequence is VCLLTGIMGAGCTALVVAVVA. The tract at residues 554–630 is calmodulin-binding; it reads DTQLTKRIKN…LVDLSKMQNV (77 aa). Residues 635 to 662 are a coiled coil; the sequence is ITELNDRSEDLEKQIGSLESKLEHLTAS. The tract at residues 702–724 is disordered; the sequence is LSDSPIGVSSTSFPTPYTSSSSC. A compositionally biased stretch (low complexity) spans 710-724; the sequence is SSTSFPTPYTSSSSC.

Belongs to the potassium channel KCNN family. KCa2.3/KCNN3 subfamily. Homodimer. Heteromultimer with KCNN2 or KCNN1; this modulates plasma membrane expression and consequently the small conductance calcium-activated potassium channel activity. The complex is composed of 4 channel subunits each of which binds to a calmodulin subunit which regulates the channel activity through calcium-binding. Interacts with CALM1.

It is found in the cell membrane. The protein resides in the cytoplasm. The protein localises to the myofibril. Its subcellular location is the sarcomere. It localises to the z line. It carries out the reaction K(+)(in) = K(+)(out). With respect to regulation, inhibited by bee venom neurotoxin apamin. Small conductance calcium-activated potassium channel that mediates the voltage-independent transmembrane transfer of potassium across the cell membrane through a constitutive interaction with calmodulin which binds the intracellular calcium allowing its opening. The current is characterized by a voltage-independent activation, an intracellular calcium concentration increase-dependent activation and a single-channel conductance of 10 picosiemens. Also presents an inwardly rectifying current, thus reducing its already small outward conductance of potassium ions, which is particularly the case when the membrane potential displays positive values, above + 20 mV. Activation is followed by membrane hyperpolarization. Thought to regulate neuronal excitability by contributing to the slow component of synaptic afterhyperpolarization. The sequence is that of Small conductance calcium-activated potassium channel protein 3 from Sus scrofa (Pig).